We begin with the raw amino-acid sequence, 704 residues long: Elongation factor G (704 aa).

One can recognise a tr-type G domain in the interval 8 to 291 (DRVRNIGIMA…AVIDYLASPV (284 aa)). GTP is bound by residues 17–24 (AHIDAGKT), 90–94 (DTPGH), and 144–147 (NKMD).

The protein belongs to the TRAFAC class translation factor GTPase superfamily. Classic translation factor GTPase family. EF-G/EF-2 subfamily.

The protein localises to the cytoplasm. In terms of biological role, catalyzes the GTP-dependent ribosomal translocation step during translation elongation. During this step, the ribosome changes from the pre-translocational (PRE) to the post-translocational (POST) state as the newly formed A-site-bound peptidyl-tRNA and P-site-bound deacylated tRNA move to the P and E sites, respectively. Catalyzes the coordinated movement of the two tRNA molecules, the mRNA and conformational changes in the ribosome. The sequence is that of Elongation factor G from Chlorobaculum tepidum (strain ATCC 49652 / DSM 12025 / NBRC 103806 / TLS) (Chlorobium tepidum).